A 346-amino-acid chain; its full sequence is MAMVSEFLKQAWFIENEEQEYVQTVKSSKGGPGSAVSPYPTFNPSSDVAALHKAIMVKGVDEATIIDILTRRNNAQRQQIKAAYLQETGKPLDETLKKALTGHLEEVVLALLKTPAQFDADELRAAMKGLGTDEDTLIEILASRTNKEIRDINRVYREELKRDLAKDITSDTSGDFRNALLSLAKGDRSEDFGVNEDLADSDARALYEAGERRKGTDVNVFNTILTTRSYPQLRRVFQKYTKYSKHDMNKVLDLELKGDIEKCLTAIVKCATSKPAFFAEKLHQAMKGVGTRHKALIRIMVSRSEIDMNDIKAFYQKMYGISLCQAILDETKGDYEKILVALCGGN.

An N-acetylalanine modification is found at Ala2. Ser5 carries the phosphoserine; by TRPM7 modification. Gln19 is covalently cross-linked (Isoglutamyl lysine isopeptide (Gln-Lys) (interchain with K-?)). The residue at position 21 (Tyr21) is a Phosphotyrosine; by EGFR. Ser27 bears the Phosphoserine; by PKC mark. Phosphoserine is present on residues Ser34 and Ser37. Position 41 is a phosphothreonine (Thr41). Annexin repeat units follow at residues 42-113, 114-185, 197-269, and 273-344; these read FNPS…ALLK, TPAQ…SLAK, DLAD…AIVK, and SKPA…ALCG. The residue at position 58 (Lys58) is an N6-acetyllysine. The Ca(2+) site is built by Gly59, Val60, Glu62, Lys97, Leu100, Glu105, Met127, Gly129, Gly131, Thr132, and Glu134. Thr136 is modified (phosphothreonine). Ca(2+) is bound by residues Asp171, Gly210, and Arg213. Lys214 is covalently cross-linked (Glycyl lysine isopeptide (Lys-Gly) (interchain with G-Cter in SUMO1); alternate). Lys214 participates in a covalent cross-link: Glycyl lysine isopeptide (Lys-Gly) (interchain with G-Cter in SUMO2); alternate. Residue Gly215 coordinates Ca(2+). Position 239 is an N6-acetyllysine (Lys239). 3 residues coordinate Ca(2+): Asp253, Glu255, and Leu256. A Glycyl lysine isopeptide (Lys-Gly) (interchain with G-Cter in SUMO1) cross-link involves residue Lys257. Residues Glu261, Met286, Gly288, and Gly290 each contribute to the Ca(2+) site. At Lys312 the chain carries N6-acetyllysine. The cysteines at positions 324 and 343 are disulfide-linked. Residues Leu328, Glu330, and Thr331 each contribute to the Ca(2+) site. Lys332 participates in a covalent cross-link: Glycyl lysine isopeptide (Lys-Gly) (interchain with G-Cter in SUMO1). Position 336 (Glu336) interacts with Ca(2+).

Belongs to the annexin family. In terms of assembly, homodimer; non-covalently linked. Homodimer; linked by transglutamylation. Homodimers linked by transglutamylation are observed in placenta, but not in other tissues. Interacts with S100A11. Heterotetramer, formed by two molecules each of S100A11 and ANXA1. Interacts with DYSF. Interacts with EGFR. In terms of processing, phosphorylated by protein kinase C, EGFR and TRPM7. Phosphorylated in response to EGF treatment. Post-translationally, sumoylated. Proteolytically cleaved by cathepsin CTSG to release the active N-terminal peptide Ac2-26.

The protein resides in the nucleus. It localises to the cytoplasm. The protein localises to the cell projection. It is found in the cilium. Its subcellular location is the basolateral cell membrane. The protein resides in the lateral cell membrane. It localises to the cell membrane. The protein localises to the apical cell membrane. It is found in the membrane. Its subcellular location is the early endosome. The protein resides in the cytoplasmic vesicle membrane. It localises to the endosome membrane. The protein localises to the secreted. It is found in the extracellular space. Its subcellular location is the extracellular exosome. The protein resides in the cytoplasmic vesicle. It localises to the secretory vesicle lumen. The protein localises to the phagocytic cup. In terms of biological role, plays important roles in the innate immune response as effector of glucocorticoid-mediated responses and regulator of the inflammatory process. Has anti-inflammatory activity. Plays a role in glucocorticoid-mediated down-regulation of the early phase of the inflammatory response. Contributes to the adaptive immune response by enhancing signaling cascades that are triggered by T-cell activation, regulates differentiation and proliferation of activated T-cells. Promotes the differentiation of T-cells into Th1 cells and negatively regulates differentiation into Th2 cells. Has no effect on unstimulated T-cells. Negatively regulates hormone exocytosis via activation of the formyl peptide receptors and reorganization of the actin cytoskeleton. Has high affinity for Ca(2+) and can bind up to eight Ca(2+) ions. Displays Ca(2+)-dependent binding to phospholipid membranes. Plays a role in the formation of phagocytic cups and phagosomes. Plays a role in phagocytosis by mediating the Ca(2+)-dependent interaction between phagosomes and the actin cytoskeleton. Functionally, functions at least in part by activating the formyl peptide receptors and downstream signaling cascades. Promotes chemotaxis of granulocytes and monocytes via activation of the formyl peptide receptors. Promotes rearrangement of the actin cytoskeleton, cell polarization and cell migration. Promotes resolution of inflammation and wound healing. Acts via neutrophil N-formyl peptide receptors to enhance the release of CXCL2. This Pan troglodytes (Chimpanzee) protein is Annexin A1 (ANXA1).